The chain runs to 31 residues: Photosystem II reaction center protein M (31 aa).

The helical transmembrane segment at 5 to 25 (ILAFIATALLILVPTAFLLII) threads the bilayer.

The protein belongs to the PsbM family. As to quaternary structure, PSII is composed of 1 copy each of membrane proteins PsbA, PsbB, PsbC, PsbD, PsbE, PsbF, PsbH, PsbI, PsbJ, PsbK, PsbL, PsbM, PsbT, PsbX, PsbY, PsbZ, Psb30/Ycf12, at least 3 peripheral proteins of the oxygen-evolving complex and a large number of cofactors. It forms dimeric complexes.

It localises to the plastid membrane. One of the components of the core complex of photosystem II (PSII). PSII is a light-driven water:plastoquinone oxidoreductase that uses light energy to abstract electrons from H(2)O, generating O(2) and a proton gradient subsequently used for ATP formation. It consists of a core antenna complex that captures photons, and an electron transfer chain that converts photonic excitation into a charge separation. This subunit is found at the monomer-monomer interface. The chain is Photosystem II reaction center protein M from Cuscuta reflexa (Southern Asian dodder).